A 121-amino-acid chain; its full sequence is Small ribosomal subunit protein uS13 (121 aa).

Residues glycine 88–lysine 121 are disordered. A compositionally biased stretch (basic residues) spans alanine 106 to lysine 121.

This sequence belongs to the universal ribosomal protein uS13 family. Part of the 30S ribosomal subunit. Forms a loose heterodimer with protein S19. Forms two bridges to the 50S subunit in the 70S ribosome.

Located at the top of the head of the 30S subunit, it contacts several helices of the 16S rRNA. In the 70S ribosome it contacts the 23S rRNA (bridge B1a) and protein L5 of the 50S subunit (bridge B1b), connecting the 2 subunits; these bridges are implicated in subunit movement. Contacts the tRNAs in the A and P-sites. This chain is Small ribosomal subunit protein uS13, found in Lactococcus lactis subsp. cremoris (strain MG1363).